The sequence spans 276 residues: Adenylyl-sulfate kinase 1, chloroplastic (276 aa).

A chloroplast-targeting transit peptide spans 1–38 (MIAAGAKSLLGLSMASPKGIFDSNSMSNSRSVVVVRAC). Residues 46–74 (TLSHNKNGSIPEVKSINGHTGQKQGPLST) form a disordered region. Positions 62–74 (NGHTGQKQGPLST) are enriched in polar residues. 108–116 (GLSGSGKST) provides a ligand contact to ATP. Residues Asp138, Arg141, Arg155, Asn158, 181–182 (IS), and Gly231 contribute to the substrate site. Ser182 serves as the catalytic Phosphoserine intermediate.

It belongs to the APS kinase family. Homodimer; disulfide-linked. Interacts with APK2. In terms of tissue distribution, expressed in root vasculature, root tips, leaf epidermal and guard cells, pollen grains and funiculus of developing seeds.

It localises to the plastid. The protein resides in the chloroplast. It catalyses the reaction adenosine 5'-phosphosulfate + ATP = 3'-phosphoadenylyl sulfate + ADP + H(+). It participates in sulfur metabolism; hydrogen sulfide biosynthesis; sulfite from sulfate: step 2/3. Catalyzes the synthesis of activated sulfate. Essential for plant reproduction and viability. Required for the production of glucosinolates. This chain is Adenylyl-sulfate kinase 1, chloroplastic (APK1), found in Arabidopsis thaliana (Mouse-ear cress).